Here is a 220-residue protein sequence, read N- to C-terminus: Putative GED domain-containing protein DNM1P46 (220 aa).

Positions 18 to 46 (VSVETRNVKPQGKDSKAEENGSHSFMHSM) are disordered. A compositionally biased stretch (basic and acidic residues) spans 28–38 (QGKDSKAEENG). One can recognise a GED domain in the interval 54 to 149 (METTQNLVDS…CCPTCTRLGT (96 aa)). Positions 173–194 (DTPGGVGRAGTAARRDSRGNEK) are disordered. The span at 185–194 (ARRDSRGNEK) shows a compositional bias: basic and acidic residues.

This chain is Putative GED domain-containing protein DNM1P46 (DNM1P46), found in Homo sapiens (Human).